Here is a 619-residue protein sequence, read N- to C-terminus: Grainyhead-like protein 2 homolog (619 aa).

The transcription activation stretch occupies residues 1–90 (MSQETDNKRL…KINEGHEDQD (90 aa)). Disordered stretches follow at residues 86–108 (HEDQ…STGE), 125–147 (NDTV…PQPA), and 423–444 (EERK…CNNS). Polar residues predominate over residues 99–108 (ETPSNLSTGE). Residues 239 to 477 (ASSTFQYTLE…DLDVQPVLFI (239 aa)) enclose the Grh/CP2 DB domain.

This sequence belongs to the grh/CP2 family. Grainyhead subfamily.

The protein resides in the nucleus. It is found in the membrane. Functionally, transcription factor playing an important role in primary neurulation and in epithelial development. Binds directly to the consensus DNA sequence 5'-AACCGGTT-3' acting as an activator and repressor on distinct target genes. This is Grainyhead-like protein 2 homolog (grhl2) from Xenopus tropicalis (Western clawed frog).